The primary structure comprises 2742 residues: Neurobeachin-like protein 2 (2742 aa).

2 disordered regions span residues 1312 to 1333 (ALSP…PSES) and 1356 to 1434 (LERA…QQTP). Residues 1384-1394 (TPSPLDGPRPF) show a composition bias toward pro residues. A compositionally biased stretch (polar residues) spans 1421–1433 (GDDTSNTSNPQQT). Thr1855 carries the phosphothreonine modification. One can recognise a BEACH-type PH domain in the interval 1903–2028 (EKREKLVLSA…LRNQVYSLLL (126 aa)). The BEACH domain occupies 2041–2333 (RSPLEMLRAS…QLLKEPHPPR (293 aa)). WD repeat units lie at residues 2374–2412 (LVLA…TWLP), 2436–2479 (KLLS…SLPR), 2482–2519 (LLNQ…VWRL), 2532–2570 (KPVQ…IHTV), 2577–2619 (AALR…TYSL), 2627–2662 (RLRA…ILHL), and 2670–2705 (PPLP…VGAG). 2 positions are modified to phosphoserine: Ser2727 and Ser2730.

It belongs to the WD repeat neurobeachin family.

It is found in the endoplasmic reticulum. Probably involved in thrombopoiesis. Plays a role in the development or secretion of alpha-granules, that contain several growth factors important for platelet biogenesis. This Mus musculus (Mouse) protein is Neurobeachin-like protein 2 (Nbeal2).